The chain runs to 103 residues: Histone H4 (103 aa).

A compositionally biased stretch (gly residues) spans 1-14 (MSGRGKGGKGLGKG). A disordered region spans residues 1-20 (MSGRGKGGKGLGKGGAKRHR). Serine 2 carries the post-translational modification N-acetylserine. Lysine 17 is subject to N6-acetyllysine. A DNA-binding region spans residues 17-21 (KRHRK). Lysine 21 carries the N6-methyllysine modification.

It belongs to the histone H4 family. As to quaternary structure, the nucleosome is a histone octamer containing two molecules each of H2A, H2B, H3 and H4 assembled in one H3-H4 heterotetramer and two H2A-H2B heterodimers. The octamer wraps approximately 147 bp of DNA.

It is found in the nucleus. The protein localises to the chromosome. Core component of nucleosome. Nucleosomes wrap and compact DNA into chromatin, limiting DNA accessibility to the cellular machineries which require DNA as a template. Histones thereby play a central role in transcription regulation, DNA repair, DNA replication and chromosomal stability. DNA accessibility is regulated via a complex set of post-translational modifications of histones, also called histone code, and nucleosome remodeling. The polypeptide is Histone H4 (Eucalyptus globulus (Tasmanian blue gum)).